The sequence spans 620 residues: Proline--tRNA ligase (620 aa).

The protein belongs to the class-II aminoacyl-tRNA synthetase family. ProS type 1 subfamily. In terms of assembly, homodimer.

It is found in the cytoplasm. It catalyses the reaction tRNA(Pro) + L-proline + ATP = L-prolyl-tRNA(Pro) + AMP + diphosphate. Its function is as follows. Catalyzes the attachment of proline to tRNA(Pro) in a two-step reaction: proline is first activated by ATP to form Pro-AMP and then transferred to the acceptor end of tRNA(Pro). As ProRS can inadvertently accommodate and process non-cognate amino acids such as alanine and cysteine, to avoid such errors it has two additional distinct editing activities against alanine. One activity is designated as 'pretransfer' editing and involves the tRNA(Pro)-independent hydrolysis of activated Ala-AMP. The other activity is designated 'posttransfer' editing and involves deacylation of mischarged Ala-tRNA(Pro). The misacylated Cys-tRNA(Pro) is not edited by ProRS. The protein is Proline--tRNA ligase of Streptococcus suis (strain 98HAH33).